Here is a 143-residue protein sequence, read N- to C-terminus: Ribosome maturation factor RimP (143 aa).

It belongs to the RimP family.

Its subcellular location is the cytoplasm. In terms of biological role, required for maturation of 30S ribosomal subunits. This Nitrosomonas eutropha (strain DSM 101675 / C91 / Nm57) protein is Ribosome maturation factor RimP.